The sequence spans 415 residues: Adenosylhomocysteinase (415 aa).

Positions 53, 124, and 147 each coordinate substrate. Residue 148 to 150 coordinates NAD(+); the sequence is TTT. The substrate site is built by lysine 177 and aspartate 181. Residues asparagine 182, 211-216, glutamate 234, asparagine 269, 290-292, and asparagine 337 each bind NAD(+); these read GYGWVG and SGH.

This sequence belongs to the adenosylhomocysteinase family. NAD(+) serves as cofactor.

Its subcellular location is the cytoplasm. The enzyme catalyses S-adenosyl-L-homocysteine + H2O = L-homocysteine + adenosine. The protein operates within amino-acid biosynthesis; L-homocysteine biosynthesis; L-homocysteine from S-adenosyl-L-homocysteine: step 1/1. May play a key role in the regulation of the intracellular concentration of adenosylhomocysteine. The sequence is that of Adenosylhomocysteinase from Sulfolobus acidocaldarius (strain ATCC 33909 / DSM 639 / JCM 8929 / NBRC 15157 / NCIMB 11770).